Consider the following 315-residue polypeptide: Secreted mono- and diacylglycerol lipase LIP2 (315 aa).

Residues 1–21 (MACFRVILYLSVIFFVQCVFA) form the signal peptide. Cys68 and Cys308 are joined by a disulfide. N-linked (GlcNAc...) asparagine glycosylation is present at Asn74. Ser182 (nucleophile) is an active-site residue. Residue Asp240 is part of the active site. N-linked (GlcNAc...) asparagine glycosylation is present at Asn265. His292 is a catalytic residue.

Belongs to the AB hydrolase superfamily. Lipase family. Class 3 subfamily.

It localises to the secreted. It carries out the reaction a monoacylglycerol + H2O = glycerol + a fatty acid + H(+). The catalysed reaction is a diacylglycerol + H2O = a monoacylglycerol + a fatty acid + H(+). Its function is as follows. Secreted lipase involved in Dandruff and seborrheic dermatitis (D/SD) probably via lipase-mediated breakdown of sebaceous lipids and release of irritating free fatty acids. Shows activity against monoglyceride and diglyceride substrates and generates free oleic acid from the substrates mono- and diolein. Able to cleave the oleic acid from both the 1 and the 2 position of the glycerol backbone as 1,2 isomers of diolein were converted into oleic acid and glycerol. Due to an absence of fatty acid synthase genes in Malassezia species, secretory lipases are essential for the yeast to generate free fatty acids from degradation of sebum and assimilate them as lipid sources for growth. Plays an essential role at the pathogen-host interface during disease progression. Also performs the reverse reaction to build diacylglycerols from monoacylglycerols. This is Secreted mono- and diacylglycerol lipase LIP2 from Malassezia restricta (strain ATCC 96810 / NBRC 103918 / CBS 7877) (Seborrheic dermatitis infection agent).